Reading from the N-terminus, the 896-residue chain is Translation initiation factor IF-2 (896 aa).

The segment at 1–260 (MDIENTNKPD…AQTNKKAHKA (260 aa)) is disordered. Positions 19–34 (KAADSKPESGKTDSKR) are enriched in basic and acidic residues. Residues 56–66 (EESSGGKASGK) are compositionally biased toward low complexity. Residues 85–136 (SVKEKKPDERLEETKKTAPRFEDKKSDAPSAQNEKRSFDSAKKEEKQTERKK) are compositionally biased toward basic and acidic residues. The span at 168 to 177 (RGQGNRPQRP) shows a compositional bias: low complexity. The tr-type G domain maps to 375-544 (PRPPVVTIMG…LLQAEVLELK (170 aa)). The G1 stretch occupies residues 384-391 (GHVDHGKT). Position 384 to 391 (384 to 391 (GHVDHGKT)) interacts with GTP. Positions 409–413 (GITQH) are G2. The tract at residues 430-433 (DTPG) is G3. GTP is bound by residues 430-434 (DTPGH) and 484-487 (NKVD). The tract at residues 484-487 (NKVD) is G4. The G5 stretch occupies residues 520-522 (SAL). The segment at 877–896 (SDSEKYKAPEIKEEGTETDE) is disordered.

Belongs to the TRAFAC class translation factor GTPase superfamily. Classic translation factor GTPase family. IF-2 subfamily.

Its subcellular location is the cytoplasm. Its function is as follows. One of the essential components for the initiation of protein synthesis. Protects formylmethionyl-tRNA from spontaneous hydrolysis and promotes its binding to the 30S ribosomal subunits. Also involved in the hydrolysis of GTP during the formation of the 70S ribosomal complex. In Treponema denticola (strain ATCC 35405 / DSM 14222 / CIP 103919 / JCM 8153 / KCTC 15104), this protein is Translation initiation factor IF-2.